The primary structure comprises 94 residues: Large ribosomal subunit protein bL25 (94 aa).

Belongs to the bacterial ribosomal protein bL25 family. As to quaternary structure, part of the 50S ribosomal subunit; part of the 5S rRNA/L5/L18/L25 subcomplex. Contacts the 5S rRNA. Binds to the 5S rRNA independently of L5 and L18.

In terms of biological role, this is one of the proteins that binds to the 5S RNA in the ribosome where it forms part of the central protuberance. This Klebsiella pneumoniae (strain 342) protein is Large ribosomal subunit protein bL25.